Consider the following 101-residue polypeptide: MAKKSKIAKNEKRKEIVARYAERRAELKAIISNPNTSDEDRLDAQFELNSQPRDAAAVRVRNRDSHDGRPRGYLRKFGLSRVRMREMAHRGELPGVRKSSW.

A disordered region spans residues 53–72 (RDAAAVRVRNRDSHDGRPRG). Positions 61–70 (RNRDSHDGRP) are enriched in basic and acidic residues.

Belongs to the universal ribosomal protein uS14 family. As to quaternary structure, part of the 30S ribosomal subunit. Contacts proteins S3 and S10.

Its function is as follows. Binds 16S rRNA, required for the assembly of 30S particles and may also be responsible for determining the conformation of the 16S rRNA at the A site. The protein is Small ribosomal subunit protein uS14 of Corynebacterium glutamicum (strain ATCC 13032 / DSM 20300 / JCM 1318 / BCRC 11384 / CCUG 27702 / LMG 3730 / NBRC 12168 / NCIMB 10025 / NRRL B-2784 / 534).